The following is a 335-amino-acid chain: Probable deoxyhypusine synthase (335 aa).

Residue K308 is the Nucleophile of the active site.

The protein belongs to the deoxyhypusine synthase family. The cofactor is NAD(+).

The enzyme catalyses [eIF5A protein]-L-lysine + spermidine = [eIF5A protein]-deoxyhypusine + propane-1,3-diamine. It participates in protein modification; eIF5A hypusination. Catalyzes the NAD-dependent oxidative cleavage of spermidine and the subsequent transfer of the butylamine moiety of spermidine to the epsilon-amino group of a specific lysine residue of the eIF-5A precursor protein to form the intermediate deoxyhypusine residue. This chain is Probable deoxyhypusine synthase, found in Thermococcus onnurineus (strain NA1).